The chain runs to 420 residues: Serine hydroxymethyltransferase (420 aa).

Residues leucine 121 and 125–127 (GHL) each bind (6S)-5,6,7,8-tetrahydrofolate. Lysine 229 is subject to N6-(pyridoxal phosphate)lysine.

This sequence belongs to the SHMT family. In terms of assembly, homodimer. Pyridoxal 5'-phosphate serves as cofactor.

Its subcellular location is the cytoplasm. The enzyme catalyses (6R)-5,10-methylene-5,6,7,8-tetrahydrofolate + glycine + H2O = (6S)-5,6,7,8-tetrahydrofolate + L-serine. It participates in one-carbon metabolism; tetrahydrofolate interconversion. The protein operates within amino-acid biosynthesis; glycine biosynthesis; glycine from L-serine: step 1/1. In terms of biological role, catalyzes the reversible interconversion of serine and glycine with tetrahydrofolate (THF) serving as the one-carbon carrier. This reaction serves as the major source of one-carbon groups required for the biosynthesis of purines, thymidylate, methionine, and other important biomolecules. Also exhibits THF-independent aldolase activity toward beta-hydroxyamino acids, producing glycine and aldehydes, via a retro-aldol mechanism. The chain is Serine hydroxymethyltransferase from Aggregatibacter actinomycetemcomitans (Actinobacillus actinomycetemcomitans).